The primary structure comprises 179 residues: Transcriptional repressor NrdR (179 aa).

A zinc finger lies at 3–34 (CPYCQHTNSRVLESRSSEGGQSIRRRRECLCC). The ATP-cone domain occupies 49–139 (ITVIKHDGKK…VYGRFQGIKD (91 aa)). The interval 160–179 (KPANDDFSEQETPSTVMMPS) is disordered. The span at 169–179 (QETPSTVMMPS) shows a compositional bias: polar residues.

The protein belongs to the NrdR family. Requires Zn(2+) as cofactor.

Negatively regulates transcription of bacterial ribonucleotide reductase nrd genes and operons by binding to NrdR-boxes. In Rippkaea orientalis (strain PCC 8801 / RF-1) (Cyanothece sp. (strain PCC 8801)), this protein is Transcriptional repressor NrdR.